The sequence spans 698 residues: D-(-)-3-hydroxybutyrate oligomer hydrolase (698 aa).

The signal sequence occupies residues 1–32 (MTTIRGGSRRASLPALALLGVLLGACHSDDNA). Ser310 acts as the Charge relay system in catalysis.

It belongs to the D-(-)-3-hydroxybutyrate oligomer hydrolase family.

It localises to the secreted. The enzyme catalyses (3R)-hydroxybutanoate dimer + H2O = 2 (R)-3-hydroxybutanoate + H(+). Its pathway is lipid metabolism; butanoate metabolism. Participates in the degradation of poly-3-hydroxybutyrate (PHB). It works downstream of poly(3-hydroxybutyrate) depolymerase, hydrolyzing D(-)-3-hydroxybutyrate oligomers of various length (3HB-oligomers) into 3HB-monomers. The polypeptide is D-(-)-3-hydroxybutyrate oligomer hydrolase (Burkholderia thailandensis (strain ATCC 700388 / DSM 13276 / CCUG 48851 / CIP 106301 / E264)).